The following is a 224-amino-acid chain: Flagellar L-ring protein (224 aa).

An N-terminal signal peptide occupies residues M1–G15. C16 is lipidated: N-palmitoyl cysteine. The S-diacylglycerol cysteine moiety is linked to residue C16.

It belongs to the FlgH family. In terms of assembly, the basal body constitutes a major portion of the flagellar organelle and consists of four rings (L,P,S, and M) mounted on a central rod.

It is found in the cell outer membrane. The protein localises to the bacterial flagellum basal body. Assembles around the rod to form the L-ring and probably protects the motor/basal body from shearing forces during rotation. This chain is Flagellar L-ring protein, found in Idiomarina loihiensis (strain ATCC BAA-735 / DSM 15497 / L2-TR).